The sequence spans 115 residues: uncharacterized protein (115 aa).

Residues serine 36–glutamate 56 form a helical membrane-spanning segment.

It is found in the membrane. This is an uncharacterized protein from Saccharomyces cerevisiae (strain ATCC 204508 / S288c) (Baker's yeast).